The sequence spans 267 residues: uncharacterized protein (267 aa).

Residues 30–52 (FMRIFLLFLFFVLFTFGVEGYVI) form a helical membrane-spanning segment.

Its subcellular location is the membrane. This is an uncharacterized protein from Aquifex aeolicus (strain VF5).